Here is a 62-residue protein sequence, read N- to C-terminus: Conotoxin Cal12.2e (62 aa).

The N-terminal stretch at 1 to 19 is a signal peptide; it reads MKLTCVLVVLLLVLPFGDL.

This sequence belongs to the conotoxin O1 superfamily. Post-translationally, contains 4 disulfide bonds. As to expression, expressed by the venom duct.

Its subcellular location is the secreted. Its function is as follows. Probable neurotoxin. The protein is Conotoxin Cal12.2e of Californiconus californicus (California cone).